The chain runs to 330 residues: Sulfate/thiosulfate import ATP-binding protein CysA (330 aa).

Positions isoleucine 3–leucine 237 constitute an ABC transporter domain. ATP is bound at residue glycine 35–threonine 42.

Belongs to the ABC transporter superfamily. Sulfate/tungstate importer (TC 3.A.1.6) family. In terms of assembly, the complex is composed of two ATP-binding proteins (CysA), two transmembrane proteins (CysT and CysW) and a solute-binding protein (CysP).

Its subcellular location is the cell inner membrane. The enzyme catalyses sulfate(out) + ATP + H2O = sulfate(in) + ADP + phosphate + H(+). The catalysed reaction is thiosulfate(out) + ATP + H2O = thiosulfate(in) + ADP + phosphate + H(+). Functionally, part of the ABC transporter complex CysAWTP involved in sulfate/thiosulfate import. Responsible for energy coupling to the transport system. The chain is Sulfate/thiosulfate import ATP-binding protein CysA from Pectobacterium atrosepticum (strain SCRI 1043 / ATCC BAA-672) (Erwinia carotovora subsp. atroseptica).